We begin with the raw amino-acid sequence, 89 residues long: Myrmicitoxin(1)-Pm2a (89 aa).

Positions 1–22 (MEIPKLLYIAVIAIGLSGSLTC) are cleaved as a signal peptide. The propeptide occupies 23–61 (ATPLANPWGDPEAEANPEAKATAEATAEAIAEALAEPEP). Asn-88 is subject to Asparagine amide.

The protein belongs to the formicidae venom clade 1 family. In terms of tissue distribution, expressed by the venom gland.

It localises to the secreted. Functionally, toxin that potently modulates mammalian voltage-gated sodium (Nav) channels, reducing the voltage threshold for activation and inhibiting channel inactivation. Shows activity on hNav1.6/SCN8A (EC(50)=176 nM), mNav1.7/SCN9A (EC(50)=102 nM) and hNav1.7 (EC(50)=154 nM). In vivo, causes spontaneous, gradual and long-lasting nocifensive behaviors by intraplantar injection in mice, as well as pronounced swelling of the injected paw. Does not have effect on insects (blowflies). The sequence is that of Myrmicitoxin(1)-Pm2a from Pogonomyrmex maricopa (Maricopa harvester ant).